The chain runs to 457 residues: tRNA modification GTPase MnmE (457 aa).

Positions 22, 86, and 125 each coordinate (6S)-5-formyl-5,6,7,8-tetrahydrofolate. One can recognise a TrmE-type G domain in the interval Gly-221–Gly-381. Residue Asn-231 coordinates K(+). GTP is bound by residues Asn-231–Ser-236, Thr-250–Thr-256, and Asp-275–Gly-278. Ser-235 is a binding site for Mg(2+). K(+) is bound by residues Thr-250, Ile-252, and Thr-255. Thr-256 lines the Mg(2+) pocket. Lys-457 contributes to the (6S)-5-formyl-5,6,7,8-tetrahydrofolate binding site.

It belongs to the TRAFAC class TrmE-Era-EngA-EngB-Septin-like GTPase superfamily. TrmE GTPase family. As to quaternary structure, homodimer. Heterotetramer of two MnmE and two MnmG subunits. Requires K(+) as cofactor.

It is found in the cytoplasm. In terms of biological role, exhibits a very high intrinsic GTPase hydrolysis rate. Involved in the addition of a carboxymethylaminomethyl (cmnm) group at the wobble position (U34) of certain tRNAs, forming tRNA-cmnm(5)s(2)U34. This is tRNA modification GTPase MnmE from Symbiobacterium thermophilum (strain DSM 24528 / JCM 14929 / IAM 14863 / T).